Consider the following 161-residue polypeptide: 2-C-methyl-D-erythritol 2,4-cyclodiphosphate synthase (161 aa).

A divalent metal cation-binding residues include Asp10 and His12. 4-CDP-2-C-methyl-D-erythritol 2-phosphate contacts are provided by residues 10–12 and 36–37; these read DVH and HS. His44 contacts a divalent metal cation. 4-CDP-2-C-methyl-D-erythritol 2-phosphate-binding positions include 58–60, 63–67, 102–108, 134–137, Phe141, and Arg144; these read DIG, FPDTD, AQAPKMA, and TTTE.

The protein belongs to the IspF family. Homotrimer. Requires a divalent metal cation as cofactor.

It catalyses the reaction 4-CDP-2-C-methyl-D-erythritol 2-phosphate = 2-C-methyl-D-erythritol 2,4-cyclic diphosphate + CMP. Its pathway is isoprenoid biosynthesis; isopentenyl diphosphate biosynthesis via DXP pathway; isopentenyl diphosphate from 1-deoxy-D-xylulose 5-phosphate: step 4/6. Involved in the biosynthesis of isopentenyl diphosphate (IPP) and dimethylallyl diphosphate (DMAPP), two major building blocks of isoprenoid compounds. Catalyzes the conversion of 4-diphosphocytidyl-2-C-methyl-D-erythritol 2-phosphate (CDP-ME2P) to 2-C-methyl-D-erythritol 2,4-cyclodiphosphate (ME-CPP) with a corresponding release of cytidine 5-monophosphate (CMP). The chain is 2-C-methyl-D-erythritol 2,4-cyclodiphosphate synthase from Shewanella baltica (strain OS155 / ATCC BAA-1091).